A 464-amino-acid polypeptide reads, in one-letter code: Protein FAM90A11 (464 aa).

3 disordered regions span residues 1–42 (MMAR…DPRL), 70–389 (PATL…HDGA), and 415–437 (HSPE…SEAP). 2 stretches are compositionally biased toward basic and acidic residues: residues 74–89 (GKKE…KPRV) and 97–114 (NKDK…DPQR). The span at 180–197 (LASLSPLRKASLSSSSSL) shows a compositional bias: low complexity. Positions 341–356 (GPSTSPQMGRRTSAQV) are enriched in polar residues.

The protein belongs to the FAM90 family.

The chain is Protein FAM90A11 from Homo sapiens (Human).